The following is a 330-amino-acid chain: Inactive hydroxysteroid dehydrogenase-like protein 1 (330 aa).

A2 carries the post-translational modification N-acetylalanine. Residues 2–82 (AAVDSFYLLY…SGATDGIGKA (81 aa)) form a required for mitochondria translocation region. Residues 74–80 (GATDGIG), D125, and K222 contribute to the NADP(+) site.

Belongs to the short-chain dehydrogenases/reductases (SDR) family. 17-beta-HSD 3 subfamily. As to quaternary structure, interacts with STYXL1. As to expression, highly expressed in testis and ovary. Also detected in thyroid, spinal cord, adrenal gland, heart, placenta, skeletal muscle, small intestine, colon, spleen, prostate and pancreas.

It is found in the mitochondrion. This is Inactive hydroxysteroid dehydrogenase-like protein 1 (HSDL1) from Homo sapiens (Human).